We begin with the raw amino-acid sequence, 208 residues long: Pyridoxine/pyridoxamine 5'-phosphate oxidase (208 aa).

Residues 55 to 60 (RMVLLK), 70 to 71 (YT), K77, and Q99 each bind FMN. K60 lines the substrate pocket. Residues Y117, R121, and S125 each coordinate substrate. FMN contacts are provided by residues 134–135 (QS) and W180. Residue 186–188 (RIH) participates in substrate binding. R190 is a binding site for FMN.

This sequence belongs to the pyridoxamine 5'-phosphate oxidase family. In terms of assembly, homodimer. Requires FMN as cofactor.

It carries out the reaction pyridoxamine 5'-phosphate + O2 + H2O = pyridoxal 5'-phosphate + H2O2 + NH4(+). The enzyme catalyses pyridoxine 5'-phosphate + O2 = pyridoxal 5'-phosphate + H2O2. Its pathway is cofactor metabolism; pyridoxal 5'-phosphate salvage; pyridoxal 5'-phosphate from pyridoxamine 5'-phosphate: step 1/1. It functions in the pathway cofactor metabolism; pyridoxal 5'-phosphate salvage; pyridoxal 5'-phosphate from pyridoxine 5'-phosphate: step 1/1. Functionally, catalyzes the oxidation of either pyridoxine 5'-phosphate (PNP) or pyridoxamine 5'-phosphate (PMP) into pyridoxal 5'-phosphate (PLP). In Pelagibacter ubique (strain HTCC1062), this protein is Pyridoxine/pyridoxamine 5'-phosphate oxidase.